We begin with the raw amino-acid sequence, 860 residues long: Putative mixed-linked glucan synthase 1 (860 aa).

The next 2 membrane-spanning stretches (helical) occupy residues 63–83 (ILHP…AFFA) and 93–113 (GAWL…SWVL). Asp-183 is an active-site residue. The stretch at 235 to 263 (ELMSDHRRVRREYEEFKVRIDSLSSTIRQ) forms a coiled coil. Residues Asp-381 and Asp-383 each contribute to the substrate site. Asp-549 is a catalytic residue. A run of 6 helical transmembrane segments spans residues 625–645 (TYPI…MWLI), 655–675 (FGEY…IGMF), 693–713 (FYMI…ALKL), 747–767 (LLIP…VAVG), 781–801 (LAVL…PFAL), and 812–832 (AVLF…YVAF).

It belongs to the glycosyltransferase 2 family. Plant cellulose synthase-like F subfamily.

It localises to the golgi apparatus membrane. May catalyze both beta-1,3 and beta-1,4 glycosidic linkage on beta-D-glucan. Essential for (1,3;1,4)-beta-D-glucans synthesis in grasses and cereals (Poaceae). The mixed-linked glucans (which are not present in walls of dicotyledons or most other monocotyledonous plants) are particularly important constituents of the walls of the starchy endosperm and aleurone cells of cereal grains such as oats, wheat, rice and barley. They can account for up to 70% by weight of the wall. The chain is Putative mixed-linked glucan synthase 1 (CSFL1) from Oryza sativa subsp. japonica (Rice).